We begin with the raw amino-acid sequence, 334 residues long: E3 ubiquitin-protein ligase CIP8 (334 aa).

Residues 111-158 are disordered; the sequence is LNSRNEIDDDEDEDEDDGDEEEEDEEENLTVNDEEDEEDDLRRRNRFP. The segment covering 117-149 has biased composition (acidic residues); that stretch reads IDDDEDEDEDDGDEEEEDEEENLTVNDEEDEED. Residues 257 to 298 form an RING-type; atypical zinc finger; sequence CAVCKDGMVMGETGKKLPCGHCYHGDCIVPWLGTRNSCPVCR. The segment at 307–334 is disordered; that stretch reads EYEEERKKRTSTVSDSAAASSSSSTSRY. Positions 317–334 are enriched in low complexity; that stretch reads STVSDSAAASSSSSTSRY.

In terms of assembly, interacts with the RING finger of COP1. Interacts with UBC8 through its N-terminal region. Expressed in both light- and dark-grown seedlings.

It is found in the cytoplasm. The enzyme catalyses S-ubiquitinyl-[E2 ubiquitin-conjugating enzyme]-L-cysteine + [acceptor protein]-L-lysine = [E2 ubiquitin-conjugating enzyme]-L-cysteine + N(6)-ubiquitinyl-[acceptor protein]-L-lysine.. The protein operates within protein modification; protein ubiquitination. Functionally, E3 ubiquitin-protein ligase that mediates ubiquitination and subsequent proteasomal degradation of target proteins. Probably forms a minimal ubiquitin ligase complex in cooperation with the E2 enzyme UBC8. Its interaction with COP1 suggests that it may participate in proteasome-mediated degradation of HY5 in vivo. This Arabidopsis thaliana (Mouse-ear cress) protein is E3 ubiquitin-protein ligase CIP8 (CIP8).